A 708-amino-acid chain; its full sequence is Soluble guanylate cyclase gcy-37 (708 aa).

Residue His-105 participates in heme binding. A coiled-coil region spans residues Leu-368 to Glu-409. The region spanning Ser-434 to Cys-562 is the Guanylate cyclase domain. Residues Asp-439 and Asp-483 each coordinate Mg(2+).

Belongs to the adenylyl cyclase class-4/guanylyl cyclase family. In terms of assembly, heterodimer; with other soluble guanylate cyclases. It depends on heme as a cofactor. Expressed in a small number of neurons, corresponding to URX, AQR and PQR neurons.

The protein localises to the cytoplasm. The enzyme catalyses GTP = 3',5'-cyclic GMP + diphosphate. May be regulated by molecular oxygen. Probably not activated by nitric oxide (NO). Its function is as follows. Synthesizes cyclic GMP (cGMP) from GTP. May play a role in sensory neurons. The protein is Soluble guanylate cyclase gcy-37 (gcy-37) of Caenorhabditis elegans.